The chain runs to 266 residues: Glucosamine-6-phosphate deaminase (266 aa).

Asp72 serves as the catalytic Proton acceptor; for enolization step. Catalysis depends on Asp141, which acts as the For ring-opening step. Residue His143 is the Proton acceptor; for ring-opening step of the active site. Catalysis depends on Glu148, which acts as the For ring-opening step.

The protein belongs to the glucosamine/galactosamine-6-phosphate isomerase family. NagB subfamily. In terms of assembly, homohexamer.

The enzyme catalyses alpha-D-glucosamine 6-phosphate + H2O = beta-D-fructose 6-phosphate + NH4(+). It participates in amino-sugar metabolism; N-acetylneuraminate degradation; D-fructose 6-phosphate from N-acetylneuraminate: step 5/5. Allosterically activated by N-acetylglucosamine 6-phosphate (GlcNAc6P). In terms of biological role, catalyzes the reversible isomerization-deamination of glucosamine 6-phosphate (GlcN6P) to form fructose 6-phosphate (Fru6P) and ammonium ion. In Enterobacter sp. (strain 638), this protein is Glucosamine-6-phosphate deaminase.